A 163-amino-acid chain; its full sequence is Large ribosomal subunit protein uL10 (163 aa).

The protein belongs to the universal ribosomal protein uL10 family. As to quaternary structure, part of the ribosomal stalk of the 50S ribosomal subunit. The N-terminus interacts with L11 and the large rRNA to form the base of the stalk. The C-terminus forms an elongated spine to which L12 dimers bind in a sequential fashion forming a multimeric L10(L12)X complex.

Forms part of the ribosomal stalk, playing a central role in the interaction of the ribosome with GTP-bound translation factors. In Mannheimia succiniciproducens (strain KCTC 0769BP / MBEL55E), this protein is Large ribosomal subunit protein uL10.